We begin with the raw amino-acid sequence, 352 residues long: Homeobox protein Mohawk (352 aa).

The interval 19–54 is disordered; it reads GASERERGGRPYSGVLDSPHARPEVGIPDGPPLKDN. A DNA-binding region (homeobox; TALE-type) is located at residues 71–132; sequence VRHKRQALQD…NARRRLKNTV (62 aa). 2 disordered regions span residues 159–189 and 245–301; these read VSSDDSCSEDGENPPRTHMNEGGYNTPVHHP and TRQR…PSKD.

It belongs to the TALE/IRO homeobox family.

It localises to the nucleus. May act as a morphogenetic regulator of cell adhesion. This chain is Homeobox protein Mohawk (MKX), found in Homo sapiens (Human).